The primary structure comprises 152 residues: FAD synthase (152 aa).

Residues 16–17 (TF), 21–24 (HPGH), Asp-101, and Tyr-129 contribute to the ATP site.

The protein belongs to the archaeal FAD synthase family. In terms of assembly, homodimer. Requires a divalent metal cation as cofactor.

It carries out the reaction FMN + ATP + H(+) = FAD + diphosphate. The protein operates within cofactor biosynthesis; FAD biosynthesis; FAD from FMN: step 1/1. Its function is as follows. Catalyzes the transfer of the AMP portion of ATP to flavin mononucleotide (FMN) to produce flavin adenine dinucleotide (FAD) coenzyme. In Methanocaldococcus vulcanius (strain ATCC 700851 / DSM 12094 / M7) (Methanococcus vulcanius), this protein is FAD synthase.